The following is a 164-amino-acid chain: Glycine cleavage system H protein, mitochondrial (164 aa).

The N-terminal 34 residues, 1–34, are a transit peptide targeting the mitochondrion; sequence MALRLWASSAANALKISCSGATRAAPAYSISRYF. The Lipoyl-binding domain occupies 56 to 138; that stretch reads VATIGITDHA…YEDGWMIKVK (83 aa). N6-lipoyllysine is present on Lys-97.

This sequence belongs to the GcvH family. In terms of assembly, the glycine cleavage system is composed of four proteins: P, T, L and H. (R)-lipoate is required as a cofactor.

The protein resides in the mitochondrion. Functionally, the glycine cleavage system catalyzes the degradation of glycine. The H protein shuttles the methylamine group of glycine from the P protein to the T protein. The polypeptide is Glycine cleavage system H protein, mitochondrial (GDCSH) (Oryza sativa subsp. indica (Rice)).